Consider the following 76-residue polypeptide: MIFECTSFETRHILNSYSCATQLSYNTYRITEKVNPIQAAVSKNNKPFVSNSDSAFFPIFSSFNFVAYTTLTFKKT.

This is an uncharacterized protein from Saccharomyces cerevisiae (strain ATCC 204508 / S288c) (Baker's yeast).